Consider the following 475-residue polypeptide: Sulfate adenylyltransferase subunit 1 (475 aa).

One can recognise a tr-type G domain in the interval Lys-25 to Val-241. Positions Gly-34–Ser-41 are G1. Gly-34–Ser-41 is a GTP binding site. The interval Gly-92–Asp-96 is G2. Positions Asp-113 to Gly-116 are G3. Residues Asp-113 to His-117 and Asn-168 to Asp-171 contribute to the GTP site. Residues Asn-168 to Asp-171 form a G4 region. Positions Ser-206–Leu-208 are G5.

It belongs to the TRAFAC class translation factor GTPase superfamily. Classic translation factor GTPase family. CysN/NodQ subfamily. In terms of assembly, heterodimer composed of CysD, the smaller subunit, and CysN.

It catalyses the reaction sulfate + ATP + H(+) = adenosine 5'-phosphosulfate + diphosphate. Its pathway is sulfur metabolism; hydrogen sulfide biosynthesis; sulfite from sulfate: step 1/3. Functionally, with CysD forms the ATP sulfurylase (ATPS) that catalyzes the adenylation of sulfate producing adenosine 5'-phosphosulfate (APS) and diphosphate, the first enzymatic step in sulfur assimilation pathway. APS synthesis involves the formation of a high-energy phosphoric-sulfuric acid anhydride bond driven by GTP hydrolysis by CysN coupled to ATP hydrolysis by CysD. This chain is Sulfate adenylyltransferase subunit 1, found in Cronobacter sakazakii (strain ATCC BAA-894) (Enterobacter sakazakii).